We begin with the raw amino-acid sequence, 944 residues long: Protein translocase subunit SecA (944 aa).

ATP contacts are provided by residues glutamine 77, 95–99, and aspartate 484; that span reads GEGKT. Residues 920-944 are disordered; the sequence is EQEKQTRKKKKKKPHEDESSKTKIG. Residues 933 to 944 are compositionally biased toward basic and acidic residues; sequence PHEDESSKTKIG.

The protein belongs to the SecA family. Monomer and homodimer. Part of the essential Sec protein translocation apparatus which comprises SecA, SecYEG and auxiliary proteins SecDF. Other proteins may also be involved.

It localises to the cell membrane. The protein resides in the cytoplasm. The catalysed reaction is ATP + H2O + cellular proteinSide 1 = ADP + phosphate + cellular proteinSide 2.. Its function is as follows. Part of the Sec protein translocase complex. Interacts with the SecYEG preprotein conducting channel. Has a central role in coupling the hydrolysis of ATP to the transfer of proteins into and across the cell membrane, serving as an ATP-driven molecular motor driving the stepwise translocation of polypeptide chains across the membrane. The protein is Protein translocase subunit SecA of Mycoplasma mycoides subsp. mycoides SC (strain CCUG 32753 / NCTC 10114 / PG1).